The sequence spans 378 residues: Ribosomal RNA large subunit methyltransferase G (378 aa).

It belongs to the methyltransferase superfamily. RlmG family.

It localises to the cytoplasm. The catalysed reaction is guanosine(1835) in 23S rRNA + S-adenosyl-L-methionine = N(2)-methylguanosine(1835) in 23S rRNA + S-adenosyl-L-homocysteine + H(+). In terms of biological role, specifically methylates the guanine in position 1835 (m2G1835) of 23S rRNA. The protein is Ribosomal RNA large subunit methyltransferase G of Shewanella sp. (strain W3-18-1).